Here is a 146-residue protein sequence, read N- to C-terminus: Hemoglobin subunit beta (146 aa).

Val1 carries the post-translational modification N-acetylvaline. One can recognise a Globin domain in the interval 2-146; sequence HLTGEEKSTV…VATALAHKYH (145 aa). Ser44 carries the phosphoserine modification. Lys59 is subject to N6-acetyllysine. His63 is a binding site for heme b. Lys82 carries the post-translational modification N6-acetyllysine. Position 92 (His92) interacts with heme b. Cys93 carries the post-translational modification S-nitrosocysteine. Position 144 is an N6-acetyllysine (Lys144).

Belongs to the globin family. Heterotetramer of two alpha chains and two beta chains. Red blood cells.

Functionally, involved in oxygen transport from the lung to the various peripheral tissues. This Macrotus californicus (Californian leaf-nosed bat) protein is Hemoglobin subunit beta (HBB).